An 822-amino-acid chain; its full sequence is Outer dense fiber protein 2 (822 aa).

The tract at residues 26–45 (KGQKTTPAKCQQKHKQKMKG) is disordered. 3 coiled-coil regions span residues 113-418 (CKMN…EECA), 452-490 (DKSD…ALMD), and 516-796 (MEEK…NYVQ).

This sequence belongs to the ODF2 family. As to quaternary structure, self-associates. Associates with microtubules and forms a fibrillar structure partially linked to the microtubule network.

Its subcellular location is the cytoplasm. It localises to the cytoskeleton. The protein resides in the microtubule organizing center. It is found in the centrosome. The protein localises to the cell projection. Its subcellular location is the cilium. It localises to the centriole. The protein resides in the spindle pole. It is found in the flagellum. In terms of biological role, seems to be a major component of sperm tail outer dense fibers (ODF). ODFs are filamentous structures located on the outside of the axoneme in the midpiece and principal piece of the mammalian sperm tail and may help to maintain the passive elastic structures and elastic recoil of the sperm tail. The chain is Outer dense fiber protein 2 (ODF2) from Gallus gallus (Chicken).